Reading from the N-terminus, the 241-residue chain is Tetrahydromethanopterin S-methyltransferase subunit A (241 aa).

Topologically, residues 1 to 220 (MAEKKEPAEG…HSGVLAGKIE (220 aa)) are cytoplasmic. H85 is a binding site for 5-hydroxybenzimidazolylcob(I)amide. A helical membrane pass occupies residues 221–241 (GIMVGLVLSLFVLGLLLFGGM).

It belongs to the MtrA family. In terms of assembly, the complex is composed of 8 subunits; MtrA, MtrB, MtrC, MtrD, MtrE, MtrF, MtrG and MtrH. It depends on 5-hydroxybenzimidazolylcob(I)amide as a cofactor.

Its subcellular location is the cell membrane. It carries out the reaction 5-methyl-5,6,7,8-tetrahydromethanopterin + coenzyme M + 2 Na(+)(in) = 5,6,7,8-tetrahydromethanopterin + methyl-coenzyme M + 2 Na(+)(out). Its pathway is one-carbon metabolism; methanogenesis from CO(2); methyl-coenzyme M from 5,10-methylene-5,6,7,8-tetrahydromethanopterin: step 2/2. Its function is as follows. Part of a complex that catalyzes the formation of methyl-coenzyme M and tetrahydromethanopterin from coenzyme M and methyl-tetrahydromethanopterin. This is an energy-conserving, sodium-ion translocating step. The polypeptide is Tetrahydromethanopterin S-methyltransferase subunit A (Methanohalobium evestigatum (strain ATCC BAA-1072 / DSM 3721 / NBRC 107634 / OCM 161 / Z-7303)).